Here is a 438-residue protein sequence, read N- to C-terminus: Histidinol dehydrogenase (438 aa).

NAD(+) is bound by residues Tyr-135, Gln-193, and Asn-216. Substrate contacts are provided by Ser-243, Gln-265, and His-268. Residues Gln-265 and His-268 each coordinate Zn(2+). Active-site proton acceptor residues include Glu-332 and His-333. 4 residues coordinate substrate: His-333, Asp-366, Glu-420, and His-425. Asp-366 lines the Zn(2+) pocket. His-425 is a Zn(2+) binding site.

The protein belongs to the histidinol dehydrogenase family. The cofactor is Zn(2+).

It carries out the reaction L-histidinol + 2 NAD(+) + H2O = L-histidine + 2 NADH + 3 H(+). Its pathway is amino-acid biosynthesis; L-histidine biosynthesis; L-histidine from 5-phospho-alpha-D-ribose 1-diphosphate: step 9/9. Catalyzes the sequential NAD-dependent oxidations of L-histidinol to L-histidinaldehyde and then to L-histidine. This is Histidinol dehydrogenase from Shewanella oneidensis (strain ATCC 700550 / JCM 31522 / CIP 106686 / LMG 19005 / NCIMB 14063 / MR-1).